Reading from the N-terminus, the 674-residue chain is Electrogenic aspartate/glutamate antiporter SLC25A13, mitochondrial (674 aa).

Alanine 2 is subject to N-acetylalanine. The interval 2–295 (AAAKVALTKR…TLADIERIAP (294 aa)) is regulatory N-terminal domain. Residues 2-331 (AAAKVALTKR…LLQVAESAYR (330 aa)) lie on the Mitochondrial intermembrane side of the membrane. EF-hand domains are found at residues 51 to 86 (SQPNPKTVELLSGVADQTKDGLISFQEFVAFESVLC), 87 to 122 (APDALFMVAFQLFDKAGKGEVTFEDVKQVFGQTTIH), 123 to 157 (QHIPFNWDSEFVQLHFGKERKRHLTYAEFTQFLLE), and 158 to 193 (IQLEHAKQAFVQRDNASTGRVTAIDFRDIMVTIRPH). Positions 66, 68, 70, 72, and 77 each coordinate Ca(2+). Residues 296 to 311 (LEEGTLPFNLAEAQRQ) form a linker loop domain region. The tract at residues 321–611 (VLLQVAESAY…LQRWFYIDFG (291 aa)) is carrier domain. Solcar repeat units lie at residues 326–418 (AESA…VRDK), 426–510 (VPLA…ARAS), and 518–605 (VSPG…LQRW). The helical transmembrane segment at 332–349 (FGLGSVAGAVGATAVYPI) threads the bilayer. At 350–392 (DLVKTRMQNQRSTGSFVGELMYKNSFDCFKKVLRYEGFFGLYR) the chain is on the mitochondrial matrix side. Residues lysine 353 and lysine 372 each carry the N6-acetyllysine modification. Residues 393-412 (GLLPQLLGVAPEKAIKLTVN) traverse the membrane as a helical segment. At 413-435 (DFVRDKFMHKDGSVPLAAEILAG) the chain is on the mitochondrial intermembrane side. A helical transmembrane segment spans residues 436 to 449 (GCAGGSQVIFTNPL). Over 450-484 (EIVKIRLQVAGEITTGPRVSALSVVRDLGFFGIYK) the chain is Mitochondrial matrix. At lysine 453 the chain carries N6-methyllysine. The residue at position 484 (lysine 484) is an N6-acetyllysine; alternate. At lysine 484 the chain carries N6-succinyllysine; alternate. The helical transmembrane segment at 485–504 (GAKACFLRDIPFSAIYFPCY) threads the bilayer. Over 505–523 (AHARASFANEDGQVSPGSL) the chain is Mitochondrial intermembrane. The chain crosses the membrane as a helical span at residues 524 to 541 (LLAGAIAGMPAASLVTPA). The Mitochondrial matrix segment spans residues 542 to 580 (DVIKTRLQVAARAGQTTYSGVIDCFKKILREEGPKALWK). Lysine 580 carries the N6-succinyllysine modification. A helical transmembrane segment spans residues 581–599 (GAARVFRSSPQFGVTLLTY). At 600 to 674 (ELLQRWFYID…PTSEAIGGGP (75 aa)) the chain is on the mitochondrial intermembrane side. Residues 612–674 (GVKPMGSEPV…PTSEAIGGGP (63 aa)) are C-terminal domain. Position 661 is an N6-acetyllysine (lysine 661).

The protein belongs to the mitochondrial carrier (TC 2.A.29) family. In terms of assembly, homodimer (via N-terminus).

It is found in the mitochondrion inner membrane. It carries out the reaction L-aspartate(in) + L-glutamate(out) + H(+)(out) = L-aspartate(out) + L-glutamate(in) + H(+)(in). The catalysed reaction is 3-sulfino-L-alanine(out) + L-glutamate(in) + H(+)(in) = 3-sulfino-L-alanine(in) + L-glutamate(out) + H(+)(out). The enzyme catalyses 3-sulfino-L-alanine(out) + L-aspartate(in) = 3-sulfino-L-alanine(in) + L-aspartate(out). Mitochondrial electrogenic aspartate/glutamate antiporter that favors efflux of aspartate and entry of glutamate and proton within the mitochondria as part of the malate-aspartate shuttle. Also mediates the uptake of L-cysteinesulfinate (3-sulfino-L-alanine) by mitochondria in exchange of L-glutamate and proton. Can also exchange L-cysteinesulfinate with aspartate in their anionic form without any proton translocation. Lacks transport activity towards gamma-aminobutyric acid (GABA). This chain is Electrogenic aspartate/glutamate antiporter SLC25A13, mitochondrial, found in Macaca fascicularis (Crab-eating macaque).